Here is an 803-residue protein sequence, read N- to C-terminus: Volume-regulated anion channel subunit LRRC8C (803 aa).

At 1–22 (MIPVTEFRQFSEQQPAFRVLKP) the chain is on the cytoplasmic side. The helical transmembrane segment at 23–43 (WWDVFTDYLSVAMLMIGVFGC) threads the bilayer. At 44-125 (TLQVMQDKII…YERALHWYAK (82 aa)) the chain is on the extracellular side. 2 disulfides stabilise this stretch: cysteine 54/cysteine 308 and cysteine 115/cysteine 293. Asparagine 64 and asparagine 70 each carry an N-linked (GlcNAc...) asparagine glycan. The chain crosses the membrane as a helical span at residues 126–146 (YFPYLVLIHTLVFMLCSNFWF). The Cytoplasmic segment spans residues 147-266 (KFPGSSSKIE…ILYAMYVRQT (120 aa)). Residues 177–209 (EVSGEDSEEKDNRKNNMSRSNTTQSGPEGSLVN) are disordered. A compositionally biased stretch (polar residues) spans 191–209 (NNMSRSNTTQSGPEGSLVN). A phosphoserine mark is found at serine 212 and serine 215. Residues 267–287 (VLKVIKFLIIIAYNSALVSKV) traverse the membrane as a helical segment. At 288-320 (QFTVDCNVDIQDMTGYKNFSCNHTMAHLFSKLS) the chain is on the extracellular side. A helical transmembrane segment spans residues 321-341 (FCYLCFVSIYGLTCLYTLYWL). The Cytoplasmic segment spans residues 342–803 (FYRSLKEYSF…SDVREQMKTE (462 aa)). LRR repeat units lie at residues 397 to 419 (ENKLKQLNLNNEWTPDKLRQKLQ), 420 to 443 (TNAHNRLELPLIMLSGLPDTVFEI), 446 to 465 (LQSLKLEIIKNVMIPATIAQ), 468 to 490 (NLQELSLHQCSVKIHSAALSFLK), 492 to 513 (NLKVLSVKFDDMRELPPWMYGL), 515 to 536 (NLEELYLVGSLSHDISRNVTLE), 543 to 563 (SLKILSIKSNVSKIPQAVVDV), 566 to 586 (HLQKMCIHNDGTKLVMLNNLK), 590 to 611 (NLTELELVHCDLERIPHAVFSL), 613 to 634 (SLQELDLKENNLKSIEEIVSFQ), 638 to 659 (KLTVLKLWHNSITYIPEHIKKL), 661 to 682 (SLERLSFSHNKIEVLPSHLFLC), 684 to 705 (KIRYLDLSYNDIRFIPPEIGVL), 707 to 728 (SLQYFSITCNKVESLPDELYFC), 730 to 751 (KLKTLKIGKNSLSVLSPKIGNL), 753 to 774 (FLSYLDVKGNHFEILPPELGDC), and 776 to 799 (ALKRAGLVVEDALFETLPSDVREQ).

The protein belongs to the LRRC8 family. As to quaternary structure, heterohexamer; oligomerizes with other LRRC8 proteins (LRRC8A, LRRC8B, LRRC8D and/or LRRC8E) to form a heterohexamer. Homoheptamer; inactive, likely because it is not targeted to the plasma membrane in the absence of LRRC8A. In vivo, the subunit composition may depend primarily on expression levels, and heterooligomeric channels containing various proportions of the different LRRC8 proteins may coexist.

Its subcellular location is the cell membrane. It is found in the endoplasmic reticulum membrane. The catalysed reaction is chloride(in) = chloride(out). The enzyme catalyses iodide(out) = iodide(in). It catalyses the reaction taurine(out) = taurine(in). It carries out the reaction 2',3'-cGAMP(out) = 2',3'-cGAMP(in). In terms of biological role, non-essential component of the volume-regulated anion channel (VRAC, also named VSOAC channel), an anion channel required to maintain a constant cell volume in response to extracellular or intracellular osmotic changes. The VRAC channel conducts iodide better than chloride and can also conduct organic osmolytes like taurine. Plays a redundant role in the efflux of amino acids, such as aspartate and glutamate, in response to osmotic stress. The VRAC channel also mediates transport of immunoreactive cyclic dinucleotide GMP-AMP (2'-3'-cGAMP), an immune messenger produced in response to DNA virus in the cytosol. Channel activity requires LRRC8A plus at least one other family member (LRRC8B, LRRC8C, LRRC8D or LRRC8E); channel characteristics depend on the precise subunit composition. The chain is Volume-regulated anion channel subunit LRRC8C from Bos taurus (Bovine).